We begin with the raw amino-acid sequence, 65 residues long: Ferredoxin-1 (65 aa).

The 29-residue stretch at 3-31 folds into the 4Fe-4S ferredoxin-type domain; that stretch reads RKFYVDQDECIACESCVEIAPGAFAMDPE. The [4Fe-4S] cluster site is built by C12, C15, C18, and C55.

As to quaternary structure, homodimer. Requires [4Fe-4S] cluster as cofactor.

Functionally, ferredoxins are iron-sulfur proteins that transfer electrons in a wide variety of metabolic reactions. In Desulfocurvibacter africanus (Desulfovibrio africanus), this protein is Ferredoxin-1 (fd1).